The sequence spans 717 residues: DNA-binding protein RFX2 (717 aa).

The interval 1–28 (MQNSEGGADSPASVALRPAAQPMPASPQ) is disordered. At Ser26 the chain carries Phosphoserine. Residues 194–269 (HLQWLLDNYE…YHYYGIRLKP (76 aa)) constitute a DNA-binding region (RFX-type winged-helix). A disordered region spans residues 286–318 (RQQPTHQKPRYRPAQKSDSLGDGSAHSNMHGMP). Position 411 is a phosphoserine (Ser411). Basic and acidic residues predominate over residues 685–710 (DGHSSEADVDGRSLGEPLVKRERSDP). Residues 685–717 (DGHSSEADVDGRSLGEPLVKRERSDPSHPLQGI) are disordered.

This sequence belongs to the RFX family. Homodimer; probably only forms homodimers in testis. Heterodimer; heterodimerizes with RFX1 and RFX3.

It is found in the nucleus. It localises to the cytoplasm. Functionally, transcription factor that acts as a key regulator of spermatogenesis. Acts by regulating expression of genes required for the haploid phase during spermiogenesis, such as genes required for cilium assembly and function. Recognizes and binds the X-box, a regulatory motif with DNA sequence 5'-GTNRCC(0-3N)RGYAAC-3' present on promoters. Probably activates transcription of the testis-specific histone gene H1-6. The sequence is that of DNA-binding protein RFX2 (Rfx2) from Mus musculus (Mouse).